A 463-amino-acid polypeptide reads, in one-letter code: Probable mannan endo-1,4-beta-mannosidase F (463 aa).

A signal peptide spans 1–18; that stretch reads MRSLSSIALLSVVGAASA. The 36-residue stretch at 19 to 54 folds into the CBM1 domain; sequence QAGPWAQCGGKSFSGSSECASGWKCQELNEWFSQCV. Positions 57–78 are disordered; that stretch reads AESTTPTVSSTPTPTDAPSVSI. Over residues 59-77 the composition is skewed to low complexity; sequence STTPTVSSTPTPTDAPSVS. Positions 75–118 are ser-rich linker; that stretch reads SVSITASATTGINKSISVSSASKSTPLPSSSSASPSPRPTGSGS. A glycan (N-linked (GlcNAc...) asparagine) is linked at Asn87. The span at 93–118 shows a compositional bias: low complexity; that stretch reads SSASKSTPLPSSSSASPSPRPTGSGS. Residues 93–121 form a disordered region; that stretch reads SSASKSTPLPSSSSASPSPRPTGSGSFAK. A catalytic region spans residues 119-463; it reads FAKADGLQFS…MDHMENVNKN (345 aa). Trp171 and Asn285 together coordinate substrate. Residue Glu286 is the Proton donor of the active site. Residue Tyr361 participates in substrate binding. Glu395 acts as the Nucleophile in catalysis. Substrate is bound at residue Trp424.

It belongs to the glycosyl hydrolase 5 (cellulase A) family.

The protein localises to the secreted. The enzyme catalyses Random hydrolysis of (1-&gt;4)-beta-D-mannosidic linkages in mannans, galactomannans and glucomannans.. Endo-1,4-mannanase, a crucial enzyme for depolymerization of seed galactomannans and wood galactoglucomannans. This Aspergillus flavus (strain ATCC 200026 / FGSC A1120 / IAM 13836 / NRRL 3357 / JCM 12722 / SRRC 167) protein is Probable mannan endo-1,4-beta-mannosidase F (manF).